The sequence spans 352 residues: MTIELSDRQKQILGATINHYIATAEPVASKAIATEYNLNVSPATVRNTMLLLEKSGLLYQPHTSAGRVPSDSGYRVYVDELIQPIPDIARKAESLLSERFIWRQQRLEVILRQAAQLLSDLSGYITLITLPNALERQIRVIQLVALDSQQVMVILVLDTYETQSALIQLEQGEEDPELRERTLQVLTNFLNHQLQGRSLVELSAIDWQKLDLEFQTYSQQLQALLRQLRDRYSHQGTAFVISGLADLLQQPEFSQVEQVQMLLHLLEDQQDQLAPLITTDSQAPSQVQIRIGSENTLAPMQCCTLVYSCYCYGDSPVGSIGILGPTRMPYARIIPLVATAADYLTEQVSCRR.

It belongs to the HrcA family.

Negative regulator of class I heat shock genes (grpE-dnaK-dnaJ and groELS operons). Prevents heat-shock induction of these operons. This chain is Heat-inducible transcription repressor HrcA, found in Thermosynechococcus vestitus (strain NIES-2133 / IAM M-273 / BP-1).